We begin with the raw amino-acid sequence, 376 residues long: Glucose-1-phosphate adenylyltransferase (376 aa).

Alpha-D-glucose 1-phosphate-binding positions include Y101, G166, 181–182 (EK), and S192.

The protein belongs to the bacterial/plant glucose-1-phosphate adenylyltransferase family. In terms of assembly, homotetramer.

The catalysed reaction is alpha-D-glucose 1-phosphate + ATP + H(+) = ADP-alpha-D-glucose + diphosphate. It participates in glycan biosynthesis; glycogen biosynthesis. In terms of biological role, involved in the biosynthesis of ADP-glucose, a building block required for the elongation reactions to produce glycogen. Catalyzes the reaction between ATP and alpha-D-glucose 1-phosphate (G1P) to produce pyrophosphate and ADP-Glc. This Bacillus cereus (strain ATCC 10987 / NRS 248) protein is Glucose-1-phosphate adenylyltransferase.